We begin with the raw amino-acid sequence, 294 residues long: 4-hydroxy-tetrahydrodipicolinate synthase (294 aa).

Thr-44 contacts pyruvate. The active-site Proton donor/acceptor is Tyr-132. Lys-160 (schiff-base intermediate with substrate) is an active-site residue. Ile-205 provides a ligand contact to pyruvate.

It belongs to the DapA family. Homotetramer; dimer of dimers.

It localises to the cytoplasm. It carries out the reaction L-aspartate 4-semialdehyde + pyruvate = (2S,4S)-4-hydroxy-2,3,4,5-tetrahydrodipicolinate + H2O + H(+). It functions in the pathway amino-acid biosynthesis; L-lysine biosynthesis via DAP pathway; (S)-tetrahydrodipicolinate from L-aspartate: step 3/4. Its function is as follows. Catalyzes the condensation of (S)-aspartate-beta-semialdehyde [(S)-ASA] and pyruvate to 4-hydroxy-tetrahydrodipicolinate (HTPA). The polypeptide is 4-hydroxy-tetrahydrodipicolinate synthase (Kosmotoga olearia (strain ATCC BAA-1733 / DSM 21960 / TBF 19.5.1)).